The sequence spans 135 residues: MSWPVLAAVAAGGALGALARAGLLAATPQHPATADWGTVLVNVLGCALIGVLMETLTRRPNPHPLLRPFLGVGVLGGFTTFSAAITDATDAFAAHQPGEALLAIAANLIGALLAVSAAAGATATLLDRAAQRKKT.

4 consecutive transmembrane segments (helical) span residues 5-25, 36-56, 68-88, and 100-120; these read VLAA…GLLA, WGTV…METL, PFLG…ITDA, and ALLA…AAAG. Na(+) is bound by residues glycine 76 and threonine 79.

The protein belongs to the fluoride channel Fluc/FEX (TC 1.A.43) family.

It localises to the cell membrane. It carries out the reaction fluoride(in) = fluoride(out). Na(+) is not transported, but it plays an essential structural role and its presence is essential for fluoride channel function. Fluoride-specific ion channel. Important for reducing fluoride concentration in the cell, thus reducing its toxicity. This chain is Fluoride-specific ion channel FluC 2, found in Thermobifida fusca (strain YX).